A 233-amino-acid polypeptide reads, in one-letter code: C-type lectin domain-containing protein 87 (233 aa).

Positions 1–20 (MRFFRFLVFPVIAGLSSVLA) are cleaved as a signal peptide. A glycan (N-linked (GlcNAc...) asparagine) is linked at N26. S32 carries O-linked (Xyl...) (chondroitin sulfate) serine glycosylation. An N-linked (GlcNAc...) asparagine glycan is attached at N81. The region spanning 93-223 (FADSCYWIET…CTYLLYSICE (131 aa)) is the C-type lectin domain. Disulfide bonds link C114–C222 and C193–C214. Residue N225 is glycosylated (N-linked (GlcNAc...) asparagine).

The sequence is that of C-type lectin domain-containing protein 87 from Caenorhabditis briggsae.